Consider the following 111-residue polypeptide: Beta-2-microglobulin (111 aa).

A signal peptide spans 1 to 17 (MRALILLSLGLLRVAVP). Residues 20–111 (PQVVVYTYKP…KTSIYKLESF (92 aa)) enclose the Ig-like C1-type domain.

The protein belongs to the beta-2-microglobulin family. In terms of assembly, heterodimer of an alpha chain and a beta chain. Beta-2-microglobulin is the beta-chain of major histocompatibility complex class I molecules.

It is found in the secreted. In terms of biological role, component of the class I major histocompatibility complex (MHC). Involved in the presentation of peptide antigens to the immune system. This is Beta-2-microglobulin (b2m) from Rostroraja eglanteria (Clearnose skate).